Consider the following 397-residue polypeptide: Purine ribonucleoside efflux pump NepI (397 aa).

The Cytoplasmic segment spans residues 1–21 (MNENIAEKFRADGVARPNWSA). Residues 22 to 42 (VFAVAFCVACLITVEFLPVSL) form a helical membrane-spanning segment. Residues 43–54 (LTPMAQDLGISE) are Periplasmic-facing. A helical membrane pass occupies residues 55-75 (GVAGQSVTVTAFVAMFSSLFI). Residues 76-85 (TQIIQATDRR) are Cytoplasmic-facing. A helical transmembrane segment spans residues 86–106 (YIVILFAVLLTASCLMVSFAN). Residue Ser107 is a topological domain, periplasmic. Residues 108-128 (FTLLLLGRACLGLALGGFWAI) traverse the membrane as a helical segment. Residues 129-147 (SASLTMRLVPARTVPKALS) lie on the Cytoplasmic side of the membrane. Residues 148 to 168 (VIFGAVSIALVIAAPLGSFLG) traverse the membrane as a helical segment. Residues 169–175 (GIIGWRN) lie on the Periplasmic side of the membrane. Residues 176 to 196 (VFNAAAVMGVLCVIWVVKSLP) form a helical membrane-spanning segment. Over 197 to 215 (SLPGEPSHQKQNMFSLLQR) the chain is Cytoplasmic. The chain crosses the membrane as a helical span at residues 216–236 (PGVMAGMIAIFMSFAGQFAFF). Over 237–255 (TYIRPVYMNLAGFDVDGLT) the chain is Periplasmic. The chain crosses the membrane as a helical span at residues 256–276 (LVLLSFGIASFVGTSFSSYVL). The Cytoplasmic portion of the chain corresponds to 277–281 (KRSVK). Residues 282–302 (LALAGAPLLLALSALTLIVWG) form a helical membrane-spanning segment. Residues 303-305 (SDK) lie on the Periplasmic side of the membrane. A helical transmembrane segment spans residues 306 to 326 (TVAAAIAIIWGLAFALVPVGW). The Cytoplasmic segment spans residues 327 to 343 (STWITRSLADQAEKAGS). Residues 344–364 (IQVAVIQLANTCGAAVGGYAL) form a helical membrane-spanning segment. Residues 365-366 (DN) lie on the Periplasmic side of the membrane. Residues 367-387 (FGLLSPLALSGGLMLLTALVV) traverse the membrane as a helical segment. Residues 388 to 397 (AAKVRITPMS) are Cytoplasmic-facing.

It belongs to the major facilitator superfamily. DHA1 family. NepI (TC 2.A.1.2.26) subfamily.

The protein localises to the cell inner membrane. The catalysed reaction is inosine(in) + H(+)(out) = inosine(out) + H(+)(in). It catalyses the reaction guanosine(in) + H(+)(out) = guanosine(out) + H(+)(in). Functionally, involved in the efflux of purine ribonucleosides, such as inosine and guanosine. The chain is Purine ribonucleoside efflux pump NepI from Salmonella paratyphi A (strain ATCC 9150 / SARB42).